The following is a 936-amino-acid chain: Protein NLP2 (936 aa).

The interval 99-130 is disordered; that stretch reads IMSVNPTEAEKTGKSSGELGSDDGAHQGSSMV. Positions 550–635 constitute an RWP-RK domain; the sequence is QPSSIGHAEK…INSVHGVDRS (86 aa). 3 disordered regions span residues 666-697, 753-782, and 794-827; these read PSVGKTVEENSDLKSEEGCSLPDGSQRQSCQL, CTNPSSSLRPSSESTRNQIVGRNSPSIQQE, and DKDHMHPSTSGMTDSSSGSASSHPTFKQNTRSAL. A compositionally biased stretch (basic and acidic residues) spans 671–682; it reads TVEENSDLKSEE. Residues 688 to 697 are compositionally biased toward polar residues; that stretch reads DGSQRQSCQL. The segment covering 754-769 has biased composition (low complexity); sequence TNPSSSLRPSSESTRN. Polar residues predominate over residues 770 to 781; it reads QIVGRNSPSIQQ. Over residues 801 to 815 the composition is skewed to low complexity; the sequence is STSGMTDSSSGSASS. Residues 816–825 show a composition bias toward polar residues; sequence HPTFKQNTRS. The region spanning 834-916 is the PB1 domain; that stretch reads ALTVKATYNG…RIVKLQVRDL (83 aa).

The protein localises to the nucleus. Functionally, probable transcription factor. The chain is Protein NLP2 from Oryza sativa subsp. japonica (Rice).